The primary structure comprises 267 residues: Pro-opiomelanocortin (267 aa).

The N-terminal stretch at 1-26 (MPRLCGSRSGALLLTLLLQASMGVRG) is a signal peptide. Phe-87 is modified (phenylalanine amide). Disordered regions lie at residues 88–156 (GRRN…RPVK) and 215–242 (KKDE…GFMT). Residue Asn-91 is glycosylated (N-linked (GlcNAc...) asparagine). The span at 94–105 (SSGGGGGGGGAG) shows a compositional bias: gly residues. The propeptide occupies 109 to 133 (EEEEVAAGEGPGPRGDGVAPGPRQD). Positions 131–143 (RQDKRSYSMEHFR) are enriched in basic and acidic residues. At Ser-136 the chain carries N-acetylserine; in Corticotropin. Valine amide is present on Val-148. Basic and acidic residues predominate over residues 215–237 (KKDEGPYKMEHFRWGSPPKDKRY).

The protein belongs to the POMC family. In terms of processing, specific enzymatic cleavages at paired basic residues yield the different active peptides. As to expression, ACTH and MSH are produced by the pituitary gland.

Its subcellular location is the secreted. Its function is as follows. Stimulates the adrenal glands to release cortisol. Functionally, anorexigenic peptide. Increases the pigmentation of skin by increasing melanin production in melanocytes. In terms of biological role, increases the pigmentation of skin by increasing melanin production in melanocytes. Endogenous orexigenic opiate. Its function is as follows. Endogenous opiate. The polypeptide is Pro-opiomelanocortin (POMC) (Sus scrofa (Pig)).